We begin with the raw amino-acid sequence, 149 residues long: Small ribosomal subunit protein bS6 (149 aa).

The interval 94 to 149 (EKHEEGPSAMMQKRDRDDRPRRDGDRPDRGGFGDRGPRPDRGDRDDRPRRPREDRA) is disordered.

This sequence belongs to the bacterial ribosomal protein bS6 family.

Its function is as follows. Binds together with bS18 to 16S ribosomal RNA. This Sinorhizobium fredii (strain NBRC 101917 / NGR234) protein is Small ribosomal subunit protein bS6.